The following is a 335-amino-acid chain: Fructose-1,6-bisphosphatase class 1 (335 aa).

Mg(2+) contacts are provided by E89, D112, L114, and D115. Residues 115-118, N208, Y241, and K271 each bind substrate; that span reads DGSS. Position 277 (E277) interacts with Mg(2+).

It belongs to the FBPase class 1 family. In terms of assembly, homotetramer. Mg(2+) is required as a cofactor.

It localises to the cytoplasm. The catalysed reaction is beta-D-fructose 1,6-bisphosphate + H2O = beta-D-fructose 6-phosphate + phosphate. It functions in the pathway carbohydrate biosynthesis; gluconeogenesis. The polypeptide is Fructose-1,6-bisphosphatase class 1 (Proteus mirabilis (strain HI4320)).